The primary structure comprises 147 residues: uncharacterized protein (147 aa).

Transmembrane regions (helical) follow at residues 35-55 (TIQL…FGNH) and 62-82 (IWLL…LFEP).

In terms of assembly, has been detected in a cytochrome bc1-aa3 supercomplex; its deletion however leaves complex activity unaffected.

It localises to the cell membrane. This is an uncharacterized protein from Corynebacterium glutamicum (strain ATCC 13032 / DSM 20300 / JCM 1318 / BCRC 11384 / CCUG 27702 / LMG 3730 / NBRC 12168 / NCIMB 10025 / NRRL B-2784 / 534).